Reading from the N-terminus, the 536-residue chain is CTP synthase (536 aa).

Positions methionine 1–isoleucine 268 are amidoligase domain. Serine 14 provides a ligand contact to CTP. Residue serine 14 coordinates UTP. Serine 15–leucine 20 is a binding site for ATP. Tyrosine 55 provides a ligand contact to L-glutamine. Aspartate 72 lines the ATP pocket. Residues aspartate 72 and glutamate 142 each contribute to the Mg(2+) site. CTP contacts are provided by residues aspartate 149–glutamate 151, lysine 189–glutamine 194, and lysine 225. Residues lysine 189–glutamine 194 and lysine 225 each bind UTP. Positions threonine 293 to asparagine 535 constitute a Glutamine amidotransferase type-1 domain. Glycine 356 is a binding site for L-glutamine. The Nucleophile; for glutamine hydrolysis role is filled by cysteine 383. L-glutamine-binding positions include leucine 384–glutamine 387, glutamate 407, and arginine 463. Active-site residues include histidine 508 and glutamate 510.

It belongs to the CTP synthase family. As to quaternary structure, homotetramer.

The enzyme catalyses UTP + L-glutamine + ATP + H2O = CTP + L-glutamate + ADP + phosphate + 2 H(+). The catalysed reaction is L-glutamine + H2O = L-glutamate + NH4(+). It catalyses the reaction UTP + NH4(+) + ATP = CTP + ADP + phosphate + 2 H(+). It functions in the pathway pyrimidine metabolism; CTP biosynthesis via de novo pathway; CTP from UDP: step 2/2. Allosterically activated by GTP, when glutamine is the substrate; GTP has no effect on the reaction when ammonia is the substrate. The allosteric effector GTP functions by stabilizing the protein conformation that binds the tetrahedral intermediate(s) formed during glutamine hydrolysis. Inhibited by the product CTP, via allosteric rather than competitive inhibition. Catalyzes the ATP-dependent amination of UTP to CTP with either L-glutamine or ammonia as the source of nitrogen. Regulates intracellular CTP levels through interactions with the four ribonucleotide triphosphates. The chain is CTP synthase from Treponema denticola (strain ATCC 35405 / DSM 14222 / CIP 103919 / JCM 8153 / KCTC 15104).